The primary structure comprises 202 residues: MEVILLERVAKLGQMGDVVKVKHGFARNFLLKRGKALRATAENRTKYDGMKAELEINNIKAKGEAAKVAEKIDGRDIVIIRQASETGQLFGSVTVRDIVAALAEDGITVSRPQVWLDAPIKTIGQQKLTVAVHPEVEAHVMVTVARSADEAERIKRGEDISTRREDRDAAAEAIAAAGEFFDPEAEPDDVAEAGGEQTAEEK.

Positions 177–202 (AGEFFDPEAEPDDVAEAGGEQTAEEK) are disordered. Positions 181 to 191 (FDPEAEPDDVA) are enriched in acidic residues.

Belongs to the bacterial ribosomal protein bL9 family.

Binds to the 23S rRNA. In Nitrobacter hamburgensis (strain DSM 10229 / NCIMB 13809 / X14), this protein is Large ribosomal subunit protein bL9.